A 2771-amino-acid chain; its full sequence is Kinesin-like protein KIN-12D (2771 aa).

Composition is skewed to basic and acidic residues over residues 1 to 13 (MSKE…RDSD) and 40 to 54 (KNPK…DRTP). 2 disordered regions span residues 1-73 (MSKE…TPDK) and 117-139 (YSET…GSCY). The segment covering 118-131 (SETNSTQNTPTKSV) has biased composition (polar residues). The 338-residue stretch at 193–530 (NVQILIRVRP…LKFAQRAKLI (338 aa)) folds into the Kinesin motor domain. Residue 274–281 (GQTGSGKT) participates in ATP binding. 3 microtubules-binding regions span residues 400-404 (SSRSH), 431-437 (VDLAGSE), and 479-483 (HIPYR). Coiled coils occupy residues 1033 to 1110 (AATA…NEME), 1267 to 1331 (ELKQ…MKEK), 1410 to 1505 (IILL…YVEN), 2108 to 2390 (ELED…EQVK), and 2512 to 2677 (RERD…LAQE). Basic residues predominate over residues 2727 to 2736 (LKGKAKSRRS). The disordered stretch occupies residues 2727-2771 (LKGKAKSRRSRNPERKMPSMPSPRRSWSQSPRSMSQVPFFSSLDR). Low complexity predominate over residues 2744 to 2762 (PSMPSPRRSWSQSPRSMSQ).

Belongs to the TRAFAC class myosin-kinesin ATPase superfamily. Kinesin family. KIN-12 subfamily. In terms of tissue distribution, expressed in tissues enriched in dividing cells, such as root meristems, root primordia, and leaf primordia/young leaves.

It localises to the cytoplasm. It is found in the cytoskeleton. Its subcellular location is the phragmoplast. Its function is as follows. Involved in the spatial control of cytokinesis by a proper phragmoplast guidance. The protein is Kinesin-like protein KIN-12D of Arabidopsis thaliana (Mouse-ear cress).